Here is a 492-residue protein sequence, read N- to C-terminus: Katanin p60 ATPase-containing subunit A1 (492 aa).

Positions 91 to 158 (PAHDGEVWSL…MKPVRAREKK (68 aa)) are disordered. A compositionally biased stretch (polar residues) spans 138–147 (LPSSKNTNNV). 250–257 (GPPGTGKT) serves as a coordination point for ATP.

It belongs to the AAA ATPase family. Katanin p60 subunit A1 subfamily. Can homooligomerize into hexameric rings, which may be promoted by interaction with microtubules. Interacts with katnb1, which may serve as a targeting subunit.

It localises to the cytoplasm. The protein localises to the cytoskeleton. The protein resides in the microtubule organizing center. Its subcellular location is the centrosome. It is found in the spindle pole. It localises to the spindle. It carries out the reaction n ATP + n H2O + a microtubule = n ADP + n phosphate + (n+1) alpha/beta tubulin heterodimers.. Its activity is regulated as follows. ATPase activity is stimulated by microtubules, which promote homooligomerization. ATP-dependent microtubule severing is stimulated by interaction with katnb1. Catalytic subunit of a complex which severs microtubules in an ATP-dependent manner. Microtubule severing may promote rapid reorganization of cellular microtubule arrays and the release of microtubules from the centrosome following nucleation. This chain is Katanin p60 ATPase-containing subunit A1 (katna1), found in Xenopus tropicalis (Western clawed frog).